A 616-amino-acid polypeptide reads, in one-letter code: Chaperone protein HscA (616 aa).

This sequence belongs to the heat shock protein 70 family.

Its function is as follows. Chaperone involved in the maturation of iron-sulfur cluster-containing proteins. Has a low intrinsic ATPase activity which is markedly stimulated by HscB. Involved in the maturation of IscU. The chain is Chaperone protein HscA from Salmonella paratyphi C (strain RKS4594).